We begin with the raw amino-acid sequence, 285 residues long: Guanylate kinase 2, chloroplastic/mitochondrial (285 aa).

The segment covering 1–19 (MLLTRRFSSALARSPLLPR) has biased composition (low complexity). Residues 1–42 (MLLTRRFSSALARSPLLPRSLPPPRAVPATPPAPRPPPRRLM) constitute a chloroplast and mitochondrion transit peptide. Residues 1–66 (MLLTRRFSSA…PPPPSGADKD (66 aa)) form a disordered region. Over residues 20–36 (SLPPPRAVPATPPAPRP) the composition is skewed to pro residues. A compositionally biased stretch (low complexity) spans 40 to 50 (RLMSSSSSGWH). The 182-residue stretch at 91 to 272 (PMILVISGPS…AVKQVESIID (182 aa)) folds into the Guanylate kinase-like domain. An ATP-binding site is contributed by 98-105 (GPSGVGKD). Catalysis depends on residues Arg-130, Arg-224, and Arg-235. Asn-255 contacts ATP.

This sequence belongs to the guanylate kinase family. Monomer.

It is found in the plastid. The protein localises to the chloroplast. The protein resides in the mitochondrion. It carries out the reaction GMP + ATP = GDP + ADP. Functionally, essential for recycling GMP and indirectly, cGMP. Essential for chloroplast differentiation at early stage of leaf development. May not be involved in the synthesis and maintenance of the organellar DNA during leaf development. This Oryza sativa subsp. japonica (Rice) protein is Guanylate kinase 2, chloroplastic/mitochondrial (V2).